Reading from the N-terminus, the 200-residue chain is Probable nicotinate-nucleotide adenylyltransferase (200 aa).

The protein belongs to the NadD family.

It carries out the reaction nicotinate beta-D-ribonucleotide + ATP + H(+) = deamido-NAD(+) + diphosphate. The protein operates within cofactor biosynthesis; NAD(+) biosynthesis; deamido-NAD(+) from nicotinate D-ribonucleotide: step 1/1. Functionally, catalyzes the reversible adenylation of nicotinate mononucleotide (NaMN) to nicotinic acid adenine dinucleotide (NaAD). This chain is Probable nicotinate-nucleotide adenylyltransferase, found in Lachnoclostridium phytofermentans (strain ATCC 700394 / DSM 18823 / ISDg) (Clostridium phytofermentans).